We begin with the raw amino-acid sequence, 1210 residues long: Ice nucleation protein (1210 aa).

The tract at residues 165–1156 is octapeptide periodicity; it reads AVYGSTLTGA…LSGGENSTLI (992 aa).

It belongs to the bacterial ice nucleation protein family.

It is found in the cell outer membrane. Its function is as follows. Ice nucleation proteins enable bacteria to nucleate crystallization in supercooled water. The chain is Ice nucleation protein (inaW) from Pseudomonas fluorescens.